The chain runs to 198 residues: Probable GTP-binding protein EngB (198 aa).

Positions 22–195 (HRNEVAFVGR…IDKLFLEFAT (174 aa)) constitute an EngB-type G domain. Residues 30-37 (GRSNVGKS), 57-61 (GKTRL), 75-78 (DLPG), 142-145 (TKSD), and 174-176 (YSS) each bind GTP. The Mg(2+) site is built by Ser-37 and Thr-59.

Belongs to the TRAFAC class TrmE-Era-EngA-EngB-Septin-like GTPase superfamily. EngB GTPase family. Mg(2+) is required as a cofactor.

Functionally, necessary for normal cell division and for the maintenance of normal septation. The chain is Probable GTP-binding protein EngB from Clostridium botulinum (strain Eklund 17B / Type B).